We begin with the raw amino-acid sequence, 163 residues long: Protein-export protein SecB (163 aa).

This sequence belongs to the SecB family. As to quaternary structure, homotetramer, a dimer of dimers. One homotetramer interacts with 1 SecA dimer.

Its subcellular location is the cytoplasm. One of the proteins required for the normal export of preproteins out of the cell cytoplasm. It is a molecular chaperone that binds to a subset of precursor proteins, maintaining them in a translocation-competent state. It also specifically binds to its receptor SecA. The polypeptide is Protein-export protein SecB (Burkholderia ambifaria (strain MC40-6)).